We begin with the raw amino-acid sequence, 376 residues long: Chaperone protein DnaJ (376 aa).

A J domain is found at 5-70 (DYYEILGVSK…QKRAAYDQYG (66 aa)). The segment at 131–209 (GVTKEIRIPT…CHGHGRVERS (79 aa)) adopts a CR-type zinc-finger fold. 8 residues coordinate Zn(2+): Cys144, Cys147, Cys161, Cys164, Cys183, Cys186, Cys197, and Cys200. 4 CXXCXGXG motif repeats span residues 144–151 (CDVCHGSG), 161–168 (CPTCHGSG), 183–190 (CPHCQGRG), and 197–204 (CNKCHGHG).

The protein belongs to the DnaJ family. In terms of assembly, homodimer. Zn(2+) serves as cofactor.

It is found in the cytoplasm. Its function is as follows. Participates actively in the response to hyperosmotic and heat shock by preventing the aggregation of stress-denatured proteins and by disaggregating proteins, also in an autonomous, DnaK-independent fashion. Unfolded proteins bind initially to DnaJ; upon interaction with the DnaJ-bound protein, DnaK hydrolyzes its bound ATP, resulting in the formation of a stable complex. GrpE releases ADP from DnaK; ATP binding to DnaK triggers the release of the substrate protein, thus completing the reaction cycle. Several rounds of ATP-dependent interactions between DnaJ, DnaK and GrpE are required for fully efficient folding. Also involved, together with DnaK and GrpE, in the DNA replication of plasmids through activation of initiation proteins. The sequence is that of Chaperone protein DnaJ from Shigella boydii serotype 18 (strain CDC 3083-94 / BS512).